The primary structure comprises 509 residues: Protein MAIN-LIKE 1 (509 aa).

The interval Gly477 to Ser509 is disordered. Residues Thr488–Leu503 are compositionally biased toward polar residues.

As to expression, expressed in root tips, the shoot apical meristem (SAM), leaves, mature flowers and embryos.

The protein resides in the nucleus. In terms of biological role, acts as an important factor for cell fate determination and maintenance throughout plant development. Required for the organization of the root apical meristem (RAM) and the shoot apical meristem (SAM). Required to maintain genome stability and cell division activity in meristematic cells. This is Protein MAIN-LIKE 1 from Arabidopsis thaliana (Mouse-ear cress).